A 578-amino-acid chain; its full sequence is MQNKELIQHAAYAAIERILNEYFREENLYQVPPQNHQWSIQLSELETLTGEFRYWSAMGHHMYHPEVWLIDGKSKKITTYKEAIARILQHMAQSADNQTAVQQHMAQIMSDIDNSIHRTARYLQSNTIDYVEDRYIVSEQSLYLGHPFHPTPKSASGFSEADLEKYAPECHTSFQLHYLAVHQDVLLTRYVEGKEDQVEKVLYQLADIDISEIPKDFILLPTHPYQINVLRQHPQYMQYSEQGLIKDLGVSGDSVYPTSSVRTVFSKALNIYLKLPIHVKITNFIRTNDLEQIERTIDAAQVIASVKDEVETPHFKLMFEEGYRALLPNPLGQTVEPEMDLLTNSAMIVREGIPNYHADKDIHVLASLFETMPDSPMSKLSQVIEQSGLAPEAWLECYLNRTLLPILKLFSNTGISLEAHVQNTLIELKDGIPDVCFVRDLEGICLSRTIATEKQLVPNVVAASSPVVYAHDEAWHRLKYYVVVNHLGHLVSTIGKATRNEVVLWQLVAHRLMTWKKEYANNAVFVDCVEDLYQTPTIAAKANLMSKLNDCGANPIYTHIPNPICHNKEVSYCESNNS.

It belongs to the IucA/IucC family. In terms of assembly, forms a mixture of monomer and dimer in solution.

It carries out the reaction (S)-2,3-diaminopropanoate + citrate + ATP = 2-[(L-alanin-3-ylcarbamoyl)methyl]-2-hydroxybutanedioate + AMP + diphosphate. The protein operates within siderophore biosynthesis. Functionally, catalyzes the synthesis of citryl-L-2,3-diaminopropionic acid from L-2,3-diaminopropionic acid (L-Dap) and citrate, the first step in staphyloferrin B biosynthesis. In Staphylococcus aureus (strain NCTC 8325 / PS 47), this protein is L-2,3-diaminopropanoate--citrate ligase.